Consider the following 231-residue polypeptide: uncharacterized protein (231 aa).

5 helical membrane passes run 36–56 (SLLAATVGAYVGIFALASFFI), 58–78 (SQVTFWILFAVEIGLLFALQW), 83–103 (APLNLVLLFGFTFCSGLTLTP), 143–163 (FTVMGKALFIVLIVIVAASLL), and 170–190 (SIVNLAISAVAAILFSFYILY).

It belongs to the BI1 family.

The protein localises to the cell membrane. This is an uncharacterized protein from Campylobacter jejuni subsp. jejuni serotype O:2 (strain ATCC 700819 / NCTC 11168).